Here is a 325-residue protein sequence, read N- to C-terminus: Biotin synthase (325 aa).

The region spanning 42–270 is the Radical SAM core domain; sequence YKVQLASLLS…QSRVRLSAGR (229 aa). [4Fe-4S] cluster-binding residues include Cys-57, Cys-61, and Cys-64. Residues Cys-101, Cys-133, Cys-193, and Arg-265 each coordinate [2Fe-2S] cluster.

Belongs to the radical SAM superfamily. Biotin synthase family. Homodimer. [4Fe-4S] cluster is required as a cofactor. The cofactor is [2Fe-2S] cluster.

The enzyme catalyses (4R,5S)-dethiobiotin + (sulfur carrier)-SH + 2 reduced [2Fe-2S]-[ferredoxin] + 2 S-adenosyl-L-methionine = (sulfur carrier)-H + biotin + 2 5'-deoxyadenosine + 2 L-methionine + 2 oxidized [2Fe-2S]-[ferredoxin]. It participates in cofactor biosynthesis; biotin biosynthesis; biotin from 7,8-diaminononanoate: step 2/2. Catalyzes the conversion of dethiobiotin (DTB) to biotin by the insertion of a sulfur atom into dethiobiotin via a radical-based mechanism. The polypeptide is Biotin synthase (Synechococcus sp. (strain WH7803)).